The following is a 97-amino-acid chain: Co-chaperonin GroES (97 aa).

This sequence belongs to the GroES chaperonin family. As to quaternary structure, heptamer of 7 subunits arranged in a ring. Interacts with the chaperonin GroEL.

It is found in the cytoplasm. Functionally, together with the chaperonin GroEL, plays an essential role in assisting protein folding. The GroEL-GroES system forms a nano-cage that allows encapsulation of the non-native substrate proteins and provides a physical environment optimized to promote and accelerate protein folding. GroES binds to the apical surface of the GroEL ring, thereby capping the opening of the GroEL channel. The polypeptide is Co-chaperonin GroES (Klebsiella pneumoniae subsp. pneumoniae (strain ATCC 700721 / MGH 78578)).